A 615-amino-acid chain; its full sequence is Dihydroxy-acid dehydratase (615 aa).

D81 is a Mg(2+) binding site. C122 provides a ligand contact to [2Fe-2S] cluster. Residues D123 and K124 each contribute to the Mg(2+) site. K124 bears the N6-carboxylysine mark. C195 contacts [2Fe-2S] cluster. E491 contacts Mg(2+). The active-site Proton acceptor is S517.

It belongs to the IlvD/Edd family. In terms of assembly, homodimer. It depends on [2Fe-2S] cluster as a cofactor. The cofactor is Mg(2+).

It catalyses the reaction (2R)-2,3-dihydroxy-3-methylbutanoate = 3-methyl-2-oxobutanoate + H2O. It carries out the reaction (2R,3R)-2,3-dihydroxy-3-methylpentanoate = (S)-3-methyl-2-oxopentanoate + H2O. It participates in amino-acid biosynthesis; L-isoleucine biosynthesis; L-isoleucine from 2-oxobutanoate: step 3/4. Its pathway is amino-acid biosynthesis; L-valine biosynthesis; L-valine from pyruvate: step 3/4. In terms of biological role, functions in the biosynthesis of branched-chain amino acids. Catalyzes the dehydration of (2R,3R)-2,3-dihydroxy-3-methylpentanoate (2,3-dihydroxy-3-methylvalerate) into 2-oxo-3-methylpentanoate (2-oxo-3-methylvalerate) and of (2R)-2,3-dihydroxy-3-methylbutanoate (2,3-dihydroxyisovalerate) into 2-oxo-3-methylbutanoate (2-oxoisovalerate), the penultimate precursor to L-isoleucine and L-valine, respectively. The polypeptide is Dihydroxy-acid dehydratase (Shewanella halifaxensis (strain HAW-EB4)).